Consider the following 334-residue polypeptide: UstYa family oxidase aprY (334 aa).

The chain crosses the membrane as a helical span at residues 55 to 75; that stretch reads IWILLTITNLIILGITVSMIV. A glycan (N-linked (GlcNAc...) asparagine) is linked at Asn-112. An HXXHC 1 motif is present at residues 185 to 189; that stretch reads HQIHC. Residue Asn-214 is glycosylated (N-linked (GlcNAc...) asparagine). The HXXHC 2 motif lies at 223–227; it reads HLGHC. Residues 306-318 show a composition bias toward basic and acidic residues; the sequence is SELGEKLGKHQKQ. Positions 306–334 are disordered; sequence SELGEKLGKHQKQEGVLGQAGHQHTKRHE.

The protein belongs to the ustYa family.

It is found in the membrane. Its pathway is secondary metabolite biosynthesis. Functionally, ustYa family oxidase; part of the gene cluster that mediates the biosynthesis of the asperipin-2a, a bicyclic peptide that possesses two macrocyclic ether rings consisting of 14- and 17-membered paracyclophans. Within the pathway, aprY is responsible for the synthesis of the bicyclic structure of asperipin-2a. The pathway starts with the processing of the precursor aprA by kexin proteases to produce 11 identical copies of the hexapeptide Phe-Tyr-Tyr-Thr-Gly-Tyr. Macrocyclization of asperipin-2a may accompany an alpha-hydroxylation-dehydration sequence to give an imine, which is readily hydrolyzed to yield putative ketone intermediate. The reductase aprR may be required for the final reduction to yield asperipin-2a. The sequence is that of UstYa family oxidase aprY from Aspergillus flavus (strain ATCC 200026 / FGSC A1120 / IAM 13836 / NRRL 3357 / JCM 12722 / SRRC 167).